We begin with the raw amino-acid sequence, 545 residues long: Ubiquitin carboxyl-terminal hydrolase 17-like protein D (545 aa).

The USP domain maps to 51 to 348 (CGLQNTGNSC…NAYVLFYVQQ (298 aa)). C60 serves as the catalytic Nucleophile. The Proton acceptor role is filled by H307. Disordered stretches follow at residues 367 to 443 (LDPE…KLGQ) and 521 to 545 (RQEGRRRSKKGKNKNKQGQKLLLVR). Basic residues predominate over residues 374–385 (KKSRRKKHKKKS). Residues 393 to 404 (EPSKNREKKATK) are compositionally biased toward basic and acidic residues. Residues 524–537 (GRRRSKKGKNKNKQ) show a composition bias toward basic residues.

Belongs to the peptidase C19 family. USP17 subfamily. Detected in T-cell, myeloid, and embryonic stem cell lines.

It is found in the nucleus. The protein resides in the endoplasmic reticulum. The catalysed reaction is Thiol-dependent hydrolysis of ester, thioester, amide, peptide and isopeptide bonds formed by the C-terminal Gly of ubiquitin (a 76-residue protein attached to proteins as an intracellular targeting signal).. Functionally, deubiquitinating enzyme that removes conjugated ubiquitin from specific proteins to regulate different cellular processes that may include cell proliferation, progression through the cell cycle, apoptosis, cell migration, and the cellular response to viral infection. The chain is Ubiquitin carboxyl-terminal hydrolase 17-like protein D from Mus musculus (Mouse).